A 346-amino-acid chain; its full sequence is Calcium uniporter protein, mitochondrial (346 aa).

Over 1–195 the chain is Mitochondrial matrix; the sequence is MTKGKLLTTP…ECDKAAHRGA (195 aa). The interval 55 to 120 is disordered; it reads ELPPPDPQDS…GEGKDEGEFV (66 aa). Basic and acidic residues-rich tracts occupy residues 76 to 91 and 109 to 119; these read MEAKDDEIKPRKKADT and REGEGKDEGEF. Residues 196 to 216 form a helical membrane-spanning segment; the sequence is QRIALAGCGGLIGYWYIVYRL. The Mitochondrial intermembrane segment spans residues 217–226; sequence TFETDLGWDV. The Selectivity filter signature appears at 224 to 232; it reads WDVMEPVTY. The chain crosses the membrane as a helical span at residues 227 to 248; it reads MEPVTYLVGLSTLIGGYMWFLW. Glu228 is a Ca(2+) binding site. At 249–346 the chain is on the mitochondrial matrix side; the sequence is HNREVSYRSA…KEGEEDDEDD (98 aa). The segment at 306–346 is disordered; the sequence is WNETQDEGGDEKVTKALRDERKNNNGTKNKSKEGEEDDEDD. Residues 315–328 show a composition bias toward basic and acidic residues; it reads DEKVTKALRDERKN.

The protein belongs to the MCU (TC 1.A.77) family. Homotetramer, assembles in a dimer or dimers configuration with two interfaces.

It is found in the mitochondrion inner membrane. The enzyme catalyses Ca(2+)(in) = Ca(2+)(out). Highly selective calcium channel localized to the inner mitochondrial membrane, which mediates calcium uptake into the mitochondrial matrix. Mitochondrial calcium homeostasis plays key roles in cellular physiology and regulates ATP production, cytoplasmic calcium signals and activation of cell death pathways. Sufficient to operate as a pore-forming channel without the need of calcium-sensor or auxiliary subunit. This is Calcium uniporter protein, mitochondrial from Cyphellophora europaea (strain CBS 101466) (Phialophora europaea).